Here is a 231-residue protein sequence, read N- to C-terminus: MNKKTKRMKKIKEHINFAKLHHIDETIDLLKKSSTVKFNESIDIAINLGINSKKSDQNIRSSTVLPNGIGRSIRVAVFTQGDNIAIAKDAGAELIGMEDLSEKIKKEGVDFDVVIATPDAMKIVTQLGQILGPRNLMPNTKLGTITTNIAEAIKNAKTGQVRYRNDKNGIIHATIGRINFHKNEIKENLNVFLESIKKAKPPQSKGIYIKKIVLSTTMGVGLMVDQSTLSL.

It belongs to the universal ribosomal protein uL1 family. In terms of assembly, part of the 50S ribosomal subunit.

In terms of biological role, binds directly to 23S rRNA. The L1 stalk is quite mobile in the ribosome, and is involved in E site tRNA release. Functionally, protein L1 is also a translational repressor protein, it controls the translation of the L11 operon by binding to its mRNA. The polypeptide is Large ribosomal subunit protein uL1 (Buchnera aphidicola subsp. Acyrthosiphon pisum (strain APS) (Acyrthosiphon pisum symbiotic bacterium)).